The following is a 785-amino-acid chain: Putative lipase C4A8.10 (785 aa).

Disordered stretches follow at residues 29 to 99 and 115 to 140; these read HSAT…SSDF and NTNAINIPEQTRGVSHTSSSPSVGTS. The span at 32-41 shows a compositional bias: low complexity; sequence TSSTTVPPTV. The span at 47-58 shows a compositional bias: basic and acidic residues; that stretch reads TKKESGSIEDRA. Over residues 63–86 the composition is skewed to polar residues; it reads MTISSGENISKQISENNSSTNPKH. Low complexity-rich tracts occupy residues 89 to 99 and 127 to 140; these read SESSPLLSSDF and GVSHTSSSPSVGTS. Ser390 serves as the catalytic Charge relay system.

Belongs to the putative lipase ROG1 family.

The polypeptide is Putative lipase C4A8.10 (Schizosaccharomyces pombe (strain 972 / ATCC 24843) (Fission yeast)).